A 580-amino-acid chain; its full sequence is uncharacterized protein (580 aa).

A PE-PPE domain is found at 300–525; sequence PGYTATFLET…LRVLVELGYD (226 aa).

Belongs to the mycobacterial PPE family.

This is an uncharacterized protein from Mycobacterium tuberculosis (strain CDC 1551 / Oshkosh).